The following is a 154-amino-acid chain: ORF3b protein (154 aa).

The mitochondrial targeting signal stretch occupies residues leucine 80–lysine 138. Residues cysteine 134–arginine 154 are nucleolar targeting. The Bipartite nuclear localization signal signature appears at lysine 135–valine 153.

In terms of assembly, interacts with host RUNX1 isoform b.

Its subcellular location is the host nucleus. The protein localises to the host nucleolus. The protein resides in the host mitochondrion. Induces host cell G0/G1 arrest and apoptosis. The chain is ORF3b protein from Homo sapiens (Human).